A 618-amino-acid chain; its full sequence is MHLSKIIFLLIILFPYHVNSRKPIKYKNVNNVFIEIYPCKAIKWERKKKKRDLIKNNKLIHNVDVNYINMITNDNHISSEKCRDIKKKRKITSSEYGMSLEFFKKNPKKVVQNLKKRGMEKYLNVIVMLKKLINEKNENEVLRNKLRNRRKLLSDHIKNLIFNSKKYEDIINRDITNDSDHKTNLIHVDEEKKKTEKKNDTQDILKDNQKIRYINKENQATNNNINNQDNSNDVLKKNKIQIEEIKKETNQINKDIDHIEMNIINLKKKIEFNLYKLPNILLNKVPKGKTTEDNKIIKFYKKENIIQLNNEEYDFIEPHEEIIKKYENNFIFSNISNKIGFGYNILVNDIAKLERALIDFMINTHVNKFLYTYVKAPEIVTKSALFNTGQLPKFEEDLFKITDNYKLLNEDAYLIPTSEVSLLNLFKNSQIDYIHLPIKLVSHSSCFRTEKNNTYGKTSKGLLREHIFQKVELINITDKKTSPFYYKKLIKQSTYILKQLNIPYRLVLLNSIETPYSASICYDIEAWLPSQQRYVEVSSCSNCLDFQARRLNLKYKIKDSNNFCHTINGSGLAVGRVLAIILEQYQIKKKHKNEITKIQVPKVLRKYMNKDIIQVEYN.

An L-serine-binding site is contributed by 417–419 (TSE). Residue 448–450 (RTE) coordinates ATP. An L-serine-binding site is contributed by Glu-472. An ATP-binding site is contributed by 536 to 539 (EVSS). Residue Ser-570 participates in L-serine binding.

It belongs to the class-II aminoacyl-tRNA synthetase family. Type-1 seryl-tRNA synthetase subfamily. As to quaternary structure, homodimer. The tRNA molecule binds across the dimer.

The protein resides in the cytoplasm. It catalyses the reaction tRNA(Ser) + L-serine + ATP = L-seryl-tRNA(Ser) + AMP + diphosphate + H(+). It carries out the reaction tRNA(Sec) + L-serine + ATP = L-seryl-tRNA(Sec) + AMP + diphosphate + H(+). Its pathway is aminoacyl-tRNA biosynthesis; selenocysteinyl-tRNA(Sec) biosynthesis; L-seryl-tRNA(Sec) from L-serine and tRNA(Sec): step 1/1. In terms of biological role, catalyzes the attachment of serine to tRNA(Ser). Is also able to aminoacylate tRNA(Sec) with serine, to form the misacylated tRNA L-seryl-tRNA(Sec), which will be further converted into selenocysteinyl-tRNA(Sec). The chain is Serine--tRNA ligase, cytoplasmic from Plasmodium falciparum (isolate 3D7).